A 950-amino-acid chain; its full sequence is MNTEAEQQLLHHARNGNAEEVRKLLEAMARAEVVADIDCKGRSKSNLGWTPLHLACYFGHKQVVQDLLKAGAKVNMLNDMGDTPLHRAAFTGRKELVMLLLEYNADTTVVNGSGQTAKEATHDKEIRQMLEAVERTQQRKLEELLLGAAREGRTAEVSALLSRPNPPDVNCSDQLGNTPLHCAAYRAHKQCVLKLLRSGADPSLKNKNDQKPLDLAHGTEMKHILVGNKVVHKALKRFEGPLWKSSRFFGWKLFWVVLEHGVLSWYRKQPDAVHNSYRQGCKHLTQAVCTVKPTDGCLFSVRCFDDTVHGFRVPKNSLQQSREKWLEAIEEHSAYSTHYCSQDQVTDDEEEDVASAMDLKESLARAQTCQQRLDREIYNFLKMIKECDVAKDMLPSFLQKADVLSEASRETCVALSDCLNLFTKQEGVRNFKLEQEQEKNKILSEALETLATEHHELERSLVEGSPPVSILSEDEFYDALSGSESEGSLTCLEAVTARAFEENEVPANSGKHRMSEGKDCGGGDALSNGIKKHRTSLPSPMFSRNDFSIWSILRKCIGMELSKITMPVIFNEPLSFLQRLTEYMEHTYLIHKASSFSDPVERMQCVAAFAVSAVASQWERTGKPFNPLLGETYELVRDDLGFRLISEQVSHHPPISAFHAEGLNNDFIFHGSIYPKLKFWGKSVEAEPKGTITLELLEHNEAYTWTNPTCCVHNIIVGKLWIEQYGNVEIINHKTGDKCVLNFKPCGLFGKELHKVEGYIQDKSKKKLCALYGKWTECLYSVDPATFDAYKKNDKKNTEEKKTSKQASTSEESDEMPVPDSESVFVIPGSALLWRIAPRPPNSAQMYNFTSFAMVLNEVDKEMETVIPKTDCRLRPDIRAMENGEIDQASEEKKRLEEKQRAARKNRSKSEEDWKTRWFHQGPNPYSGAQDWIYSGSYWDRNYFNLPDIY.

The tract at residues 1 to 237 (MNTEAEQQLL…NKVVHKALKR (237 aa)) is interaction with RAB7A. ANK repeat units follow at residues 47 to 76 (LGWTPLHLACYFGHKQVVQDLLKAGAKVNM), 80 to 109 (MGDTPLHRAAFTGRKELVMLLLEYNADTTV), and 175 to 204 (LGNTPLHCAAYRAHKQCVLKLLRSGADPSL). One can recognise a PH domain in the interval 235-334 (LKRFEGPLWK…WLEAIEEHSA (100 aa)). The stretch at 430–463 (NFKLEQEQEKNKILSEALETLATEHHELERSLVE) forms a coiled coil. An FFAT motif is present at residues 469–483 (SILSEDEFYDALSGS). Disordered stretches follow at residues 795 to 821 (KKNTEEKKTSKQASTSEESDEMPVPDS) and 881 to 913 (MENGEIDQASEEKKRLEEKQRAARKNRSKSEED). Residues 877 to 913 (DIRAMENGEIDQASEEKKRLEEKQRAARKNRSKSEED) are a coiled coil. A compositionally biased stretch (basic and acidic residues) spans 890 to 901 (SEEKKRLEEKQR).

Belongs to the OSBP family. Interacts (via FFAT motif) with VAPA. Interacts (via FFAT motif) with VAPB. Interacts with the GTP-bound form of RAB7A. Interacts with OAS1B. Interacts (via FFAT motif) with MOSPD2 (via MSP domain). Detected in prostate and liver.

Its subcellular location is the late endosome. Its function is as follows. Binds phospholipids; exhibits strong binding to phosphatidic acid and weak binding to phosphatidylinositol 3-phosphate. Stabilizes GTP-bound RAB7A on late endosomes/lysosomes and alters functional properties of late endocytic compartments via its interaction with RAB7A. Binds 25-hydroxycholesterol and cholesterol. The chain is Oxysterol-binding protein-related protein 1 from Rattus norvegicus (Rat).